A 352-amino-acid polypeptide reads, in one-letter code: uncharacterized protein (352 aa).

The signal sequence occupies residues 1 to 22 (MIFKKTILIFIISFFFISISFA). Residues 25 to 47 (SSSSSSSSSSSSSSWSSSESSSS) show a composition bias toward low complexity. A disordered region spans residues 25–49 (SSSSSSSSSSSSSSWSSSESSSSPA). N-linked (GlcNAc...) asparagine glycosylation is found at asparagine 76, asparagine 110, asparagine 182, asparagine 212, and asparagine 223.

The protein localises to the secreted. This is an uncharacterized protein from Dictyostelium discoideum (Social amoeba).